The primary structure comprises 183 residues: Peptidyl-tRNA hydrolase (183 aa).

Tyrosine 14 is a tRNA binding site. Histidine 19 serves as the catalytic Proton acceptor. TRNA is bound by residues tyrosine 55 and asparagine 57.

It belongs to the PTH family. Monomer.

It is found in the cytoplasm. It catalyses the reaction an N-acyl-L-alpha-aminoacyl-tRNA + H2O = an N-acyl-L-amino acid + a tRNA + H(+). Its function is as follows. Hydrolyzes ribosome-free peptidyl-tRNAs (with 1 or more amino acids incorporated), which drop off the ribosome during protein synthesis, or as a result of ribosome stalling. Functionally, catalyzes the release of premature peptidyl moieties from peptidyl-tRNA molecules trapped in stalled 50S ribosomal subunits, and thus maintains levels of free tRNAs and 50S ribosomes. This Thermus thermophilus (strain ATCC BAA-163 / DSM 7039 / HB27) protein is Peptidyl-tRNA hydrolase.